The chain runs to 78 residues: Large ribosomal subunit protein bL31 (78 aa).

It belongs to the bacterial ribosomal protein bL31 family. Type A subfamily. In terms of assembly, part of the 50S ribosomal subunit.

In terms of biological role, binds the 23S rRNA. The protein is Large ribosomal subunit protein bL31 (rpmE) of Rickettsia conorii (strain ATCC VR-613 / Malish 7).